The sequence spans 150 residues: Large ribosomal subunit protein bL9 (150 aa).

This sequence belongs to the bacterial ribosomal protein bL9 family.

Functionally, binds to the 23S rRNA. This Shewanella putrefaciens (strain CN-32 / ATCC BAA-453) protein is Large ribosomal subunit protein bL9.